The following is a 323-amino-acid chain: tRNA U34 carboxymethyltransferase (323 aa).

Carboxy-S-adenosyl-L-methionine is bound by residues K91, W105, K110, G130, 152–154 (DPT), 181–182 (IE), M196, Y200, and R315.

This sequence belongs to the class I-like SAM-binding methyltransferase superfamily. CmoB family. Homotetramer.

It catalyses the reaction carboxy-S-adenosyl-L-methionine + 5-hydroxyuridine(34) in tRNA = 5-carboxymethoxyuridine(34) in tRNA + S-adenosyl-L-homocysteine + H(+). In terms of biological role, catalyzes carboxymethyl transfer from carboxy-S-adenosyl-L-methionine (Cx-SAM) to 5-hydroxyuridine (ho5U) to form 5-carboxymethoxyuridine (cmo5U) at position 34 in tRNAs. The polypeptide is tRNA U34 carboxymethyltransferase (Shigella boydii serotype 18 (strain CDC 3083-94 / BS512)).